The chain runs to 656 residues: Heat shock 70 kDa protein, mitochondrial (656 aa).

Residues 1–23 (MFARRLRGAGSLAAASLARWQSS) constitute a mitochondrion transit peptide. Residues 624 to 656 (EYQQAAAGNSSSSSGNTDSSQGEQQQQGDQQKQ) are disordered. Low complexity predominate over residues 626–656 (QQAAAGNSSSSSGNTDSSQGEQQQQGDQQKQ).

It belongs to the heat shock protein 70 family.

It localises to the mitochondrion matrix. The protein resides in the kinetoplast. In terms of biological role, may participate in eukaryotic mitochondrial DNA replication. The chain is Heat shock 70 kDa protein, mitochondrial (MTP70) from Trypanosoma cruzi.